The following is a 100-amino-acid chain: Guanine nucleotide-binding protein subunit gamma 2 (100 aa).

N-acetylmethionine is present on Met-1. Positions 19–55 form a coiled coil; sequence TRGKHRIQAELKRLEQEARFLEEELEQLEKMDNASAS. The 80-residue stretch at 21–100 folds into the G protein gamma domain; sequence GKHRIQAELK…EAKRCGCSIL (80 aa). The tract at residues 90–96 is regulates lipidation and cell membrane subcellular localization; the sequence is KEAKRCG. Cys-95 carries S-palmitoyl cysteine lipidation. The residue at position 97 (Cys-97) is a Cysteine methyl ester. A lipid anchor (S-farnesyl cysteine) is attached at Cys-97. The propeptide at 98 to 100 is removed in mature form; sequence SIL.

G proteins are composed of 3 units, alpha, beta and gamma. GPG1 interacts with the beta subunit GB1. The dimer GB1-GG2 interacts with NDL1, NDL2 and NDL3. Binds to NUDT7. As to expression, mostly expressed in roots (excluded from the stele), seedlings (especially at the hypocotyl/root junction), floral stems, floral buds, flowers and siliques, and, to a lower extent, in leaves (restricted to guard cells). Also present in hydathods.

Its subcellular location is the cell membrane. Guanine nucleotide-binding proteins (G proteins) are involved as a modulator or transducer in various transmembrane signaling systems. The beta and gamma chains are required for the GTPase activity, for replacement of GDP by GTP, and for G protein-effector interaction. Involved in the abscisic acid (ABA) and ethylene signaling pathways. Regulates basipetal transport of auxin (IAA) in roots and hypocotyls, and thus modulates root architecture (e.g. lateral root formation). The heterotrimeric G-protein controls defense responses to necrotrophic and vascular fungi probably by modulating cell wall-related genes expression; involved in resistance to Plectosphaerella cucumerina. The chain is Guanine nucleotide-binding protein subunit gamma 2 (GG2) from Arabidopsis thaliana (Mouse-ear cress).